Consider the following 266-residue polypeptide: Glutamate racemase (266 aa).

Residues 9–10 (DS) and 41–42 (YG) each bind substrate. Catalysis depends on Cys-72, which acts as the Proton donor/acceptor. 73–74 (NT) is a substrate binding site. Cys-184 serves as the catalytic Proton donor/acceptor. 185 to 186 (TH) lines the substrate pocket.

Belongs to the aspartate/glutamate racemases family. In terms of assembly, homodimer.

The catalysed reaction is L-glutamate = D-glutamate. Its pathway is cell wall biogenesis; peptidoglycan biosynthesis. Functionally, provides the (R)-glutamate required for cell wall biosynthesis. This is Glutamate racemase from Staphylococcus aureus (strain MRSA252).